Here is a 252-residue protein sequence, read N- to C-terminus: Diphthine synthase (252 aa).

S-adenosyl-L-methionine-binding positions include L9, D85, V88, 113–114 (SI), L165, A204, and H229.

The protein belongs to the diphthine synthase family. As to quaternary structure, homodimer.

The catalysed reaction is 2-[(3S)-amino-3-carboxypropyl]-L-histidyl-[translation elongation factor 2] + 3 S-adenosyl-L-methionine = diphthine-[translation elongation factor 2] + 3 S-adenosyl-L-homocysteine + 3 H(+). The protein operates within protein modification; peptidyl-diphthamide biosynthesis. S-adenosyl-L-methionine-dependent methyltransferase that catalyzes the trimethylation of the amino group of the modified target histidine residue in translation elongation factor 2 (EF-2), to form an intermediate called diphthine. The three successive methylation reactions represent the second step of diphthamide biosynthesis. The sequence is that of Diphthine synthase from Methanocorpusculum labreanum (strain ATCC 43576 / DSM 4855 / Z).